Here is a 470-residue protein sequence, read N- to C-terminus: Maturase K (470 aa).

The protein belongs to the intron maturase 2 family. MatK subfamily.

The protein resides in the plastid. It localises to the chloroplast. Usually encoded in the trnK tRNA gene intron. Probably assists in splicing its own and other chloroplast group II introns. This chain is Maturase K, found in Nypa fruticans (Nypa palm).